The chain runs to 266 residues: Auxin-responsive protein IAA21 (266 aa).

The EAR-like (transcriptional repression) motif lies at 24 to 28 (LRLGL). Residues 27 to 50 (GLPGTAEEAESEGGGGGGTDAAPL) are disordered. The PB1 domain occupies 146–248 (CLYVKVSMDG…SCRRLRIMKG (103 aa)).

The protein belongs to the Aux/IAA family. As to quaternary structure, homodimers and heterodimers. As to expression, highly expressed in flowers. Expressed in roots and seedlings.

The protein localises to the nucleus. Aux/IAA proteins are short-lived transcriptional factors that function as repressors of early auxin response genes at low auxin concentrations. In Oryza sativa subsp. japonica (Rice), this protein is Auxin-responsive protein IAA21 (IAA21).